Here is a 623-residue protein sequence, read N- to C-terminus: V-type proton ATPase catalytic subunit A (623 aa).

Glycine 252–threonine 259 serves as a coordination point for ATP.

This sequence belongs to the ATPase alpha/beta chains family. As to quaternary structure, V-ATPase is a heteromultimeric enzyme composed of a peripheral catalytic V1 complex (main components: subunits A, B, C, D, E, and F) attached to an integral membrane V0 proton pore complex (main component: the proteolipid protein).

The catalysed reaction is ATP + H2O + 4 H(+)(in) = ADP + phosphate + 5 H(+)(out). In terms of biological role, catalytic subunit of the peripheral V1 complex of vacuolar ATPase. V-ATPase vacuolar ATPase is responsible for acidifying a variety of intracellular compartments in eukaryotic cells. The sequence is that of V-type proton ATPase catalytic subunit A from Brassica napus (Rape).